A 65-amino-acid polypeptide reads, in one-letter code: Beta-defensin 106A (65 aa).

Positions 1–20 (MRTFLFLFAVLFFLTPAKNE) are cleaved as a signal peptide. 3 disulfides stabilise this stretch: C26–C53, C33–C47, and C37–C54.

The protein belongs to the beta-defensin family. Monomer. Interacts with CCR2 (via extracellular N-terminal region); this interaction may preferentially require specific tyrosine sulfation on CCR2.

It localises to the secreted. The protein resides in the membrane. Has antibacterial activity. Acts as a ligand for C-C chemokine receptor CCR2. This Pongo pygmaeus (Bornean orangutan) protein is Beta-defensin 106A (DEFB106A).